The following is a 187-amino-acid chain: Protein GrpE (187 aa).

Residues Met1–Asn30 are disordered.

Belongs to the GrpE family. As to quaternary structure, homodimer.

Its subcellular location is the cytoplasm. Participates actively in the response to hyperosmotic and heat shock by preventing the aggregation of stress-denatured proteins, in association with DnaK and GrpE. It is the nucleotide exchange factor for DnaK and may function as a thermosensor. Unfolded proteins bind initially to DnaJ; upon interaction with the DnaJ-bound protein, DnaK hydrolyzes its bound ATP, resulting in the formation of a stable complex. GrpE releases ADP from DnaK; ATP binding to DnaK triggers the release of the substrate protein, thus completing the reaction cycle. Several rounds of ATP-dependent interactions between DnaJ, DnaK and GrpE are required for fully efficient folding. This chain is Protein GrpE, found in Borreliella burgdorferi (strain ATCC 35210 / DSM 4680 / CIP 102532 / B31) (Borrelia burgdorferi).